A 174-amino-acid polypeptide reads, in one-letter code: Co-chaperone protein HscB homolog (174 aa).

Residues 2-74 form the J domain; the sequence is NYFELFSLLP…IQRAEHLLTL (73 aa).

Belongs to the HscB family. As to quaternary structure, interacts with HscA and stimulates its ATPase activity.

Its function is as follows. Co-chaperone involved in the maturation of iron-sulfur cluster-containing proteins. Seems to help targeting proteins to be folded toward HscA. The protein is Co-chaperone protein HscB homolog of Shewanella halifaxensis (strain HAW-EB4).